We begin with the raw amino-acid sequence, 394 residues long: uncharacterized protein (394 aa).

12 helical membrane passes run 13–35 (AIIG…VPVL), 50–72 (VGVA…GWLS), 79–97 (LIIN…IAWS), 107–129 (GRGL…ELVL), 136–158 (IMGL…SPII), 168–190 (FLIN…PASL), 218–240 (INLS…PVEL), 250–272 (VPEI…CICF), 277–299 (VLYS…GIFL), 309–331 (ILGL…ALVN), 344–366 (AIYS…ILFS), and 371–393 (FEVL…LYLI).

Belongs to the major facilitator superfamily.

The protein localises to the cell membrane. This is an uncharacterized protein from Buchnera aphidicola subsp. Baizongia pistaciae (strain Bp).